An 818-amino-acid chain; its full sequence is Patatin-like phospholipase domain-containing protein YALI0D16379g (818 aa).

Disordered regions lie at residues 1–50 (MLKL…RDVN) and 154–178 (EEKRRRGKSKKDKEGSEGDKTKTKE). A compositionally biased stretch (polar residues) spans 22 to 38 (SQQLTLDSPEGSETSSR). A compositionally biased stretch (basic and acidic residues) spans 164 to 178 (KDKEGSEGDKTKTKE). The chain crosses the membrane as a helical span at residues 223 to 243 (WPALFFIGMWLLFLTTIYASV). A PNPLA domain is found at 398–589 (LCLSGGGCFA…RTDIPVDALN (192 aa)). Residues 429–433 (GTSGG) carry the GXSXG motif. Residue Ser-431 is the Nucleophile of the active site. Residue Asp-576 is the Proton acceptor of the active site. The disordered stretch occupies residues 781-805 (AGTDISSSNSDYDHEPQWEMDEGDS).

Belongs to the PLPL family.

It localises to the membrane. Its function is as follows. Probable lipid hydrolase. In Yarrowia lipolytica (strain CLIB 122 / E 150) (Yeast), this protein is Patatin-like phospholipase domain-containing protein YALI0D16379g.